The following is a 4244-amino-acid chain: Tenascin-X (4244 aa).

The first 23 residues, 1–23 (MMPAQYALTSSLVLLVLLSTARA), serve as a signal peptide directing secretion. The interval 27 to 57 (SSRSNVTLPAPRPPPQPGGHTVGAGVGSPSS) is disordered. The N-linked (GlcNAc...) asparagine glycan is linked to Asn31. An EGF-like 1; incomplete domain is found at 156-168 (CSCEPGWGGPTCS). Residues 169-189 (DPTDAEIPPSSPPSASGSCPD) form a disordered region. 18 EGF-like domains span residues 183-213 (ASGS…GPSC), 214-244 (GWPS…GPDC), 245-275 (SQRS…GDDC), 276-306 (GMRS…GEDC), 307-337 (GVRS…GEDC), 338-368 (GTRS…GEDC), 369-399 (STRT…GDDC), 400-430 (GVRS…GTDC), 431-461 (GSRA…GEDC), 462-492 (GVRS…GRDC), 493-523 (GTRA…GEDC), 524-554 (GSRR…GEDC), 555-585 (STRS…GEDC), 586-616 (GVRQ…SEDC), 617-647 (SIRT…GPTC), 648-679 (ATRM…EDCG), 684-714 (PASA…GPDC), and 715-746 (AIQT…EDCG). 54 disulfide bridges follow: Cys187/Cys197, Cys191/Cys202, Cys204/Cys213, Cys218/Cys228, Cys222/Cys233, Cys235/Cys244, Cys249/Cys259, Cys253/Cys264, Cys266/Cys275, Cys280/Cys290, Cys284/Cys295, Cys297/Cys306, Cys311/Cys321, Cys315/Cys326, Cys328/Cys337, Cys342/Cys352, Cys346/Cys357, Cys359/Cys368, Cys373/Cys383, Cys377/Cys388, Cys390/Cys399, Cys404/Cys414, Cys408/Cys419, Cys421/Cys430, Cys435/Cys445, Cys439/Cys450, Cys452/Cys461, Cys466/Cys476, Cys470/Cys481, Cys483/Cys492, Cys497/Cys507, Cys501/Cys512, Cys514/Cys523, Cys528/Cys538, Cys532/Cys543, Cys545/Cys554, Cys559/Cys569, Cys563/Cys574, Cys576/Cys585, Cys590/Cys600, Cys594/Cys605, Cys607/Cys616, Cys621/Cys631, Cys625/Cys636, Cys638/Cys647, Cys652/Cys662, Cys656/Cys667, Cys669/Cys678, Cys688/Cys698, Cys692/Cys703, Cys705/Cys714, Cys719/Cys729, Cys723/Cys734, and Cys736/Cys745. Residues 926-956 (TGSSPLGLLGTTDEPPPSGPSTTQGAQAPLL) are disordered. 10 consecutive Fibronectin type-III domains span residues 959 to 1051 (RPQE…IMDK), 1064 to 1153 (RLGE…PQSD), 1161 to 1249 (HLGN…APER), 1263 to 1352 (LLGE…PQED), 1374 to 1468 (LLGE…TPPA), 1476 to 1572 (RLGE…TEAS), 1574 to 1669 (PPLE…RGDA), 1674 to 1764 (PPRL…ARSA), 1778 to 1868 (LGEE…REET), and 1883 to 1971 (HLGE…VPEE). The disordered stretch occupies residues 1340-1372 (PESVVAKTAPQEDVDETPSPTELGTEAPESPEE). A Cell attachment site motif is present at residues 1666–1668 (RGD). A disordered region spans residues 1752–1777 (PLTADGTTEARSAMDDTGTKRPPKPR). The tract at residues 1968–1990 (VPEEEKPSEPPTATPEPPIKPRL) is disordered. Positions 1976 to 1987 (EPPTATPEPPIK) are enriched in pro residues. Fibronectin type-III domains are found at residues 1989 to 2089 (RLGE…SMEA), 2097 to 2185 (LLGE…APEE), 2196 to 2296 (RLGQ…TEPP), 2305 to 2398 (RLEE…TPSP), and 2408 to 2502 (PPEE…PQED). Positions 2281 to 2304 (APGKDEEMAPASTEPPTPEPPIKP) are disordered. The interval 2495 to 2542 (GVTAPQEDVDETPSPTEPGTEAPGPPEEPLLGELTVTGSSPDSLSLSW) is disordered. Residues 2506 to 2516 (TPSPTEPGTEA) are compositionally biased toward low complexity. 15 Fibronectin type-III domains span residues 2519-2617 (PPEE…TTQA), 2625-2723 (PPIK…TPSP), 2733-2840 (PPEE…TTPE), 2841-2939 (PPNK…TPAP), 2949-3042 (PPEE…APKD), 3062-3153 (RLGE…TPSP), 3168-3260 (LLGE…TPLP), 3264-3355 (RLGE…TKPS), 3357-3446 (RLGE…PLEK), 3451-3544 (HLGE…TPAP), 3553-3647 (PPEE…LAPA), 3657-3754 (RLSQ…TLSP), 3758-3847 (SPRD…VPDG), 3848-3934 (PTQL…TGLE), and 3935-4025 (APRD…LRIP). Over residues 2530–2542 (VTGSSPDSLSLSW) the composition is skewed to polar residues. Disordered regions lie at residues 2824-2847 (PEDE…KPRL) and 2933-2969 (EEET…DSLS). Residues 2937–2946 (PAPTEPSTEA) are compositionally biased toward low complexity. Residues 2960 to 2969 (VTGSSPDSLS) are compositionally biased toward polar residues. Disordered stretches follow at residues 3536–3559 (APEE…EPRL) and 3636–3662 (LSAE…SQLS). Residues Asn3855, Asn3908, and Asn3920 are each glycosylated (N-linked (GlcNAc...) asparagine). The Fibrinogen C-terminal domain maps to 4021–4236 (GLRIPFPRDC…FTEMKLRPRN (216 aa)). A disulfide bridge links Cys4030 with Cys4060. Asn4095 carries an N-linked (GlcNAc...) asparagine glycan. A disulfide bridge links Cys4182 with Cys4195.

It belongs to the tenascin family. As to quaternary structure, homotrimer. Interacts with type I, III and V collagens and tropoelastin via its 29th fibronectin type-III domain. Highly expressed in fetal adrenal, in fetal testis, fetal smooth, striated and cardiac muscle. Isoform XB-short is only expressed in the adrenal gland.

It localises to the secreted. Its subcellular location is the extracellular space. It is found in the extracellular matrix. Appears to mediate interactions between cells and the extracellular matrix. Substrate-adhesion molecule that appears to inhibit cell migration. Accelerates collagen fibril formation. May play a role in supporting the growth of epithelial tumors. The chain is Tenascin-X from Homo sapiens (Human).